The sequence spans 149 residues: Large ribosomal subunit protein bL9 (149 aa).

The protein belongs to the bacterial ribosomal protein bL9 family.

In terms of biological role, binds to the 23S rRNA. This Salmonella agona (strain SL483) protein is Large ribosomal subunit protein bL9.